The sequence spans 1447 residues: Calcium-dependent secretion activator (1447 aa).

A compositionally biased stretch (acidic residues) spans 1 to 15 (MIDPSSSEEEGEDDA). 2 disordered regions span residues 1–35 (MIDP…TSAV) and 101–163 (DTGN…EEEE). Composition is skewed to polar residues over residues 18-32 (NVSS…TKGT) and 111-126 (GIPS…QSVG). Low complexity predominate over residues 127 to 144 (SSRANSLPRPLSPSPSLT). Positions 145–163 (SEKHETAEPHGKHEREEEE) are enriched in basic and acidic residues. The C2 domain maps to 417–547 (SKYGLQKLKR…PLSSKSPEWH (131 aa)). Residues 573 to 683 (NMKHCGYLYA…WVMAMYRATG (111 aa)) enclose the PH domain. The 188-residue stretch at 970 to 1157 (VDMDRVLSEQ…DMIEQCIQRT (188 aa)) folds into the MHD1 domain. A compositionally biased stretch (acidic residues) spans 1386–1395 (REGEEEDNGD). The tract at residues 1386–1406 (REGEEEDNGDESTSNIPRGLP) is disordered.

Restricted to the nervous system at all stages of development and highly localized at synapses (at protein level).

It localises to the cytoplasmic vesicle membrane. It is found in the synapse. In terms of biological role, calcium-binding protein involved in exocytosis of vesicles filled with neurotransmitters and neuropeptides. May specifically mediate the Ca(2+)-dependent exocytosis of large dense-core vesicles (DCVs) and other dense-core vesicles. However, it probably also participates in small clear synaptic vesicles (SVs) exocytosis and it is unclear whether its function is related to Ca(2+) triggering. This chain is Calcium-dependent secretion activator, found in Drosophila melanogaster (Fruit fly).